Here is a 123-residue protein sequence, read N- to C-terminus: ATP synthase epsilon chain (123 aa).

The protein belongs to the ATPase epsilon chain family. In terms of assembly, F-type ATPases have 2 components, CF(1) - the catalytic core - and CF(0) - the membrane proton channel. CF(1) has five subunits: alpha(3), beta(3), gamma(1), delta(1), epsilon(1). CF(0) has three main subunits: a, b and c.

It is found in the cell inner membrane. Functionally, produces ATP from ADP in the presence of a proton gradient across the membrane. The sequence is that of ATP synthase epsilon chain from Helicobacter pylori (strain Shi470).